A 147-amino-acid polypeptide reads, in one-letter code: Hemoglobin subunit beta (147 aa).

Val-2 is subject to N-acetylvaline. The Globin domain maps to 3 to 147 (HLSAEEKGHI…VATALAHKYH (145 aa)). At Lys-60 the chain carries N6-acetyllysine. His-64 contributes to the heme b binding site. Lys-83 bears the N6-acetyllysine mark. His-93 serves as a coordination point for heme b. An S-nitrosocysteine modification is found at Cys-94. At Lys-145 the chain carries N6-acetyllysine.

It belongs to the globin family. In terms of assembly, heterotetramer of two alpha chains and two beta chains. As to expression, red blood cells.

Its function is as follows. Involved in oxygen transport from the lung to the various peripheral tissues. This Sminthopsis crassicaudata (Fat-tailed dunnart) protein is Hemoglobin subunit beta (HBB).